The chain runs to 235 residues: Calcium-activated potassium channel subunit beta-2 (235 aa).

The tract at residues 1–45 is ball and chain; sequence MFIWTSGRTSSSYRHDEKRNIYQKIRDHDLLDKRKTVTALKAGED. The Cytoplasmic segment spans residues 1–46; it reads MFIWTSGRTSSSYRHDEKRNIYQKIRDHDLLDKRKTVTALKAGEDR. Residues 47 to 67 form a helical membrane-spanning segment; the sequence is AILLGLAMMVCSIMMYFLLGI. At 68-194 the chain is on the extracellular side; it reads TLLRSYMQSV…VILTKLYSSN (127 aa). 3 N-linked (GlcNAc...) asparagine glycosylation sites follow: Asn88, Asn96, and Asn119. The helical transmembrane segment at 195 to 215 threads the bilayer; sequence VLFHSLFWPTCMMAGGVAIVA. The Cytoplasmic segment spans residues 216 to 235; the sequence is MVKLTQYLSLLCERIQRINR.

Belongs to the KCNMB (TC 8.A.14.1) family. KCNMB2 subfamily. Interacts with KCNMA1 tetramer. There are probably 4 molecules of KCMNB2 per KCNMA1 tetramer. In terms of processing, N-glycosylated. In terms of tissue distribution, expressed in kidney, heart and brain. Highly expressed in ovary. Expressed at low level in other tissues.

It is found in the membrane. Its function is as follows. Regulatory subunit of the calcium activated potassium KCNMA1 (maxiK) channel. Modulates the calcium sensitivity and gating kinetics of KCNMA1, thereby contributing to KCNMA1 channel diversity. Acts as a negative regulator that confers rapid and complete inactivation of KCNMA1 channel complex. May participate in KCNMA1 inactivation in chromaffin cells of the adrenal gland or in hippocampal CA1 neurons. This Homo sapiens (Human) protein is Calcium-activated potassium channel subunit beta-2 (KCNMB2).